The chain runs to 837 residues: Translation initiation factor IF-2 (837 aa).

The disordered stretch occupies residues 94–252 (QRSPEEIEAE…NAHGFQSPTG (159 aa)). Positions 96-136 (SPEEIEAERKRELDERRAVENAARQKAEEEARVRAEEEARR) are enriched in basic and acidic residues. The span at 137-171 (QPAAPSAPAEAVAAPAPVAEPVREAAPVVAAAPAA) shows a compositional bias: low complexity. Basic and acidic residues-rich tracts occupy residues 172-213 (DTRK…EKAP) and 221-230 (TTDEESDGFR). The segment covering 231–244 (RGGRGKAKLKKRNA) has biased composition (basic residues). A tr-type G domain is found at 337-506 (PRAPVVTVMG…LLQAEVLELT (170 aa)). A G1 region spans residues 346–353 (GHVDHGKT). GTP is bound at residue 346–353 (GHVDHGKT). The segment at 371 to 375 (GITQH) is G2. The interval 392-395 (DTPG) is G3. GTP is bound by residues 392–396 (DTPGH) and 446–449 (NKID). Residues 446–449 (NKID) are G4. The interval 482–484 (SAK) is G5.

The protein belongs to the TRAFAC class translation factor GTPase superfamily. Classic translation factor GTPase family. IF-2 subfamily.

The protein localises to the cytoplasm. Functionally, one of the essential components for the initiation of protein synthesis. Protects formylmethionyl-tRNA from spontaneous hydrolysis and promotes its binding to the 30S ribosomal subunits. Also involved in the hydrolysis of GTP during the formation of the 70S ribosomal complex. This is Translation initiation factor IF-2 from Pseudomonas fluorescens (strain Pf0-1).